Here is a 229-residue protein sequence, read N- to C-terminus: Urease accessory protein UreF (229 aa).

Belongs to the UreF family. In terms of assembly, ureD, UreF and UreG form a complex that acts as a GTP-hydrolysis-dependent molecular chaperone, activating the urease apoprotein by helping to assemble the nickel containing metallocenter of UreC. The UreE protein probably delivers the nickel.

It localises to the cytoplasm. Functionally, required for maturation of urease via the functional incorporation of the urease nickel metallocenter. In Staphylococcus aureus (strain USA300), this protein is Urease accessory protein UreF.